Consider the following 354-residue polypeptide: MSKVQSITRESWILSTFPEWGSWLNEEIEQEQVAPGTFAMWWLGCTGIWLKSEGGTNVCVDFWCGTGKQSHGNPLMKTGHQMQRMAGVKKLQPNLRTTPFVLDPFAIRQIDAVLATHDHNDHIDVNVAAAVMQNCADDVPFIGPQTCVDLWVGWGVPKERCIVVKPGDVVKVKDIEIHALDAFDRTALITLPADQKAAGVLPDGMDVRAVNYLFKTPGGNLYHSGDSHYSNYYAKHGNEHQIDVALGSYGENPRGITDKMTSTDILRMAESLNTKVVIPFHHDIWSNFQADPQEIRVLWEMKKDRLKYGFKPFIWQVGGKFTWPLDKDNFEYHYPRGFDDCFTIEPDLPFKSFL.

Belongs to the UlaG family. A divalent metal cation is required as a cofactor.

The protein localises to the cytoplasm. It catalyses the reaction L-ascorbate 6-phosphate + H2O = 3-dehydro-L-gulonate 6-phosphate. Its pathway is cofactor degradation; L-ascorbate degradation; D-xylulose 5-phosphate from L-ascorbate: step 1/4. Probably catalyzes the hydrolysis of L-ascorbate-6-P into 3-keto-L-gulonate-6-P. Is essential for L-ascorbate utilization under anaerobic conditions. The polypeptide is Probable L-ascorbate-6-phosphate lactonase UlaG (Salmonella gallinarum (strain 287/91 / NCTC 13346)).